The sequence spans 330 residues: Solute carrier family 25 member 16 (330 aa).

Solcar repeat units follow at residues 32–118 (FYWL…YKTL), 126–214 (SGHV…LKSV), and 236–326 (LKTH…MKQF). 6 helical membrane passes run 33-52 (YWLR…KTTV), 95-112 (GAMM…FMAF), 132-149 (LMAG…TYPL), 189-209 (GLMP…FTFG), 242-262 (LLCG…FDVT), and 297-317 (GLYR…AVAF).

Belongs to the mitochondrial carrier (TC 2.A.29) family. Mostly in thyroid, liver, lung, kidney and to a lesser extent in heart and skeletal muscle.

It localises to the mitochondrion inner membrane. Functionally, may be involved in the transport of coenzyme A in the mitochondrial matrix. Very little is known about the physiological function of this carrier. This is Solute carrier family 25 member 16 (SLC25A16) from Bos taurus (Bovine).